Consider the following 129-residue polypeptide: M-zodatoxin-Lt8g (129 aa).

The signal sequence occupies residues Met-1–Ser-20. The propeptide occupies Lys-21 to Arg-60. The Processing quadruplet motif signature appears at Glu-57–Arg-60.

Cleavage of the propeptide depends on the processing quadruplet motif (XXXR, with at least one of X being E). In terms of tissue distribution, expressed by the venom gland.

Its subcellular location is the secreted. Insecticidal, cytolytic and antimicrobial peptide. Has insecticidal activity against the flesh fly S.carnaria. Has antibacterial activity against the Gram-negative bacteria E.coli. Forms voltage-dependent, ion-permeable channels in membranes. At high concentration causes cell membrane lysis. The chain is M-zodatoxin-Lt8g (cit 1-8) from Lachesana tarabaevi (Spider).